The following is an 82-amino-acid chain: Small ribosomal subunit protein bS18 (82 aa).

This sequence belongs to the bacterial ribosomal protein bS18 family. Part of the 30S ribosomal subunit. Forms a tight heterodimer with protein bS6.

Binds as a heterodimer with protein bS6 to the central domain of the 16S rRNA, where it helps stabilize the platform of the 30S subunit. The protein is Small ribosomal subunit protein bS18 of Rhizobium meliloti (strain 1021) (Ensifer meliloti).